Consider the following 190-residue polypeptide: Guanylate kinase (190 aa).

In terms of domain architecture, Guanylate kinase-like spans asparagine 3–glutamate 185. Residue alanine 10–serine 17 participates in ATP binding.

It belongs to the guanylate kinase family.

The protein resides in the cytoplasm. It catalyses the reaction GMP + ATP = GDP + ADP. In terms of biological role, essential for recycling GMP and indirectly, cGMP. This Francisella tularensis subsp. tularensis (strain FSC 198) protein is Guanylate kinase.